The following is a 168-amino-acid chain: HTH-type transcriptional regulator IscR (168 aa).

In terms of domain architecture, HTH rrf2-type spans 2 to 131 (KLTSKGRYAV…NNITLGELMK (130 aa)). Positions 28-51 (LADISERQGISLSYLEQLFSKLRK) form a DNA-binding region, H-T-H motif. [2Fe-2S] cluster is bound by residues Cys-92, Cys-98, and Cys-104.

It depends on [2Fe-2S] cluster as a cofactor.

Regulates the transcription of several operons and genes involved in the biogenesis of Fe-S clusters and Fe-S-containing proteins. This Vibrio campbellii (strain ATCC BAA-1116) protein is HTH-type transcriptional regulator IscR.